We begin with the raw amino-acid sequence, 101 residues long: MVTNITLILTLMTLASVTAQTFQYSRGWTNGKRDGHKRDELRDEVLERILTPCQLDKLKYVLEGKPLNDRLFVPCDYIEEEVNQPKRYKGERNHELFDVFQ.

The N-terminal stretch at 1 to 19 (MVTNITLILTLMTLASVTA) is a signal peptide. Residue Gln20 is modified to Pyrrolidone carboxylic acid. Asn30 carries the post-translational modification Asparagine amide.

This sequence belongs to the corazonin family.

It is found in the secreted. Functionally, cardioactive peptide. Corazonin is probably involved in the physiological regulation of the heart beat. The protein is Pro-corazonin (crz) of Bombyx mori (Silk moth).